The primary structure comprises 652 residues: DNA ligase (652 aa).

Residues 29 to 33 (DSDYD), 78 to 79 (SL), and Glu107 contribute to the NAD(+) site. Residue Lys109 is the N6-AMP-lysine intermediate of the active site. NAD(+) is bound by residues Arg130, Glu164, Lys278, and Lys302. Residues Cys395, Cys398, Cys413, and Cys418 each contribute to the Zn(2+) site. The region spanning 577–652 (NSDAALFGLT…IEDEDWLRQL (76 aa)) is the BRCT domain.

The protein belongs to the NAD-dependent DNA ligase family. LigA subfamily. It depends on Mg(2+) as a cofactor. Requires Mn(2+) as cofactor.

The enzyme catalyses NAD(+) + (deoxyribonucleotide)n-3'-hydroxyl + 5'-phospho-(deoxyribonucleotide)m = (deoxyribonucleotide)n+m + AMP + beta-nicotinamide D-nucleotide.. Its function is as follows. DNA ligase that catalyzes the formation of phosphodiester linkages between 5'-phosphoryl and 3'-hydroxyl groups in double-stranded DNA using NAD as a coenzyme and as the energy source for the reaction. It is essential for DNA replication and repair of damaged DNA. The chain is DNA ligase from Streptococcus pyogenes serotype M3 (strain ATCC BAA-595 / MGAS315).